We begin with the raw amino-acid sequence, 350 residues long: Quinolinate phosphoribosyltransferase [decarboxylating] 1 (350 aa).

Substrate is bound by residues Arg-141, 172–174, Arg-196, Lys-206, Glu-239, Asp-266, 298–300, and 319–321; these read TRK, SGN, and SGA.

The protein belongs to the NadC/ModD family.

The catalysed reaction is nicotinate beta-D-ribonucleotide + CO2 + diphosphate = quinolinate + 5-phospho-alpha-D-ribose 1-diphosphate + 2 H(+). It functions in the pathway alkaloid biosynthesis; nicotine biosynthesis. Its pathway is cofactor biosynthesis; NAD(+) biosynthesis; nicotinate D-ribonucleotide from quinolinate: step 1/1. Involved in the biosynthesis of pyridine alkaloid natural products, leading mainly to the production of anabasine, anatabine, nicotine and nornicotine, effective deterrents against herbivores with antiparasitic and pesticide properties (neurotoxins); nornicotine serves as the precursor in the synthesis of the carcinogen compound N'-nitrosonornicotine (NNN). Involved in the catabolism of quinolinic acid (QA). The polypeptide is Quinolinate phosphoribosyltransferase [decarboxylating] 1 (Nicotiana glauca (Glaucous tobacco)).